The primary structure comprises 261 residues: Kallikrein-1 (261 aa).

The signal sequence occupies residues 1 to 18 (MRFLILFLALSLGGIDAA). A propeptide spans 19–24 (PPVQSR) (activation peptide). In terms of domain architecture, Peptidase S1 spans 25 to 258 (IVGGFNCEKN…FNTWIRETMA (234 aa)). Cystine bridges form between Cys31–Cys173, Cys50–Cys66, Cys152–Cys219, Cys184–Cys198, and Cys209–Cys234. His65 functions as the Charge relay system in the catalytic mechanism. Residue Asn102 is glycosylated (N-linked (GlcNAc...) asparagine). Asp120 serves as the catalytic Charge relay system. The Charge relay system role is filled by Ser213.

Belongs to the peptidase S1 family. Kallikrein subfamily.

It catalyses the reaction Preferential cleavage of Arg-|-Xaa bonds in small molecule substrates. Highly selective action to release kallidin (lysyl-bradykinin) from kininogen involves hydrolysis of Met-|-Xaa or Leu-|-Xaa.. Functionally, glandular kallikreins cleave Met-Lys and Arg-Ser bonds in kininogen to release Lys-bradykinin. This Mus musculus (Mouse) protein is Kallikrein-1 (Klk1).